Here is a 550-residue protein sequence, read N- to C-terminus: Luciferin 4-monooxygenase (550 aa).

The Microbody targeting signal signature appears at 548–550; sequence SKL.

It belongs to the ATP-dependent AMP-binding enzyme family. Mg(2+) is required as a cofactor.

It localises to the peroxisome. The catalysed reaction is firefly D-luciferin + ATP + O2 = firefly oxyluciferin + hnu + AMP + CO2 + diphosphate. Functionally, produces green light with a wavelength of 562 nm. This Photinus pyralis (Common eastern firefly) protein is Luciferin 4-monooxygenase.